The sequence spans 293 residues: Nucleotide-binding protein DvMF_0424 (293 aa).

13 to 20 provides a ligand contact to ATP; that stretch reads GLSGAGKS. 65–68 provides a ligand contact to GTP; the sequence is DLRE.

This sequence belongs to the RapZ-like family.

Functionally, displays ATPase and GTPase activities. The polypeptide is Nucleotide-binding protein DvMF_0424 (Nitratidesulfovibrio vulgaris (strain DSM 19637 / Miyazaki F) (Desulfovibrio vulgaris)).